The following is a 488-amino-acid chain: Catalase (488 aa).

The segment at 1 to 24 (MTDRRNLTTNQGVPIGDNQNSMTA) is disordered. The span at 7 to 23 (LTTNQGVPIGDNQNSMT) shows a compositional bias: polar residues. Catalysis depends on residues histidine 55 and asparagine 128. Tyrosine 338 serves as a coordination point for heme.

It belongs to the catalase family. Heme serves as cofactor.

It localises to the cytoplasm. It catalyses the reaction 2 H2O2 = O2 + 2 H2O. Its function is as follows. Decomposes hydrogen peroxide into water and oxygen; serves to protect cells from the toxic effects of hydrogen peroxide. The polypeptide is Catalase (kat) (Listeria seeligeri).